Here is a 239-residue protein sequence, read N- to C-terminus: Yolk ferritin (239 aa).

An N-terminal signal peptide occupies residues 1 to 18 (MNSVLFLTLAVCSSLAYG). Positions 27-217 (QNYKENINQL…HAITRLRSFE (191 aa)) constitute a Ferritin-like diiron domain. E44 and E79 together coordinate Fe cation. The tract at residues 105 to 146 (KDACETVMKFVTSDTSGLEEFRDRRMCICGFVATKTINDNCG) is insertion; not present in other ferritins. Fe cation contacts are provided by E165 and Q199.

Belongs to the ferritin family. As to quaternary structure, oligomer of 12 or 24 subunits. The functional molecule is roughly spherical and contains a central cavity into which the polymeric ferric iron core is deposited. Midgut gland and bloodstream.

It is found in the secreted. It catalyses the reaction 4 Fe(2+) + O2 + 4 H(+) = 4 Fe(3+) + 2 H2O. In terms of biological role, stores iron in a soluble, non-toxic, readily available form. Important for iron homeostasis. Has ferroxidase activity. Iron is taken up in the ferrous form and deposited as ferric hydroxides after oxidation. The protein is Yolk ferritin of Lymnaea stagnalis (Great pond snail).